Here is a 369-residue protein sequence, read N- to C-terminus: 2-aminoethylphosphonate--pyruvate transaminase (369 aa).

K193 carries the N6-(pyridoxal phosphate)lysine modification.

Belongs to the class-V pyridoxal-phosphate-dependent aminotransferase family. PhnW subfamily. As to quaternary structure, homodimer. Pyridoxal 5'-phosphate is required as a cofactor.

The catalysed reaction is (2-aminoethyl)phosphonate + pyruvate = phosphonoacetaldehyde + L-alanine. Its function is as follows. Involved in phosphonate degradation. The sequence is that of 2-aminoethylphosphonate--pyruvate transaminase from Pseudomonas fluorescens (strain ATCC BAA-477 / NRRL B-23932 / Pf-5).